A 600-amino-acid chain; its full sequence is Glutamine--fructose-6-phosphate aminotransferase [isomerizing] (600 aa).

Cys-2 (nucleophile; for GATase activity) is an active-site residue. Residues 2–217 (CGIVGFIGEQ…DKEIVIVTKE (216 aa)) form the Glutamine amidotransferase type-2 domain. 2 SIS domains span residues 283–422 (IRNA…AKGE) and 452–590 (LAKQ…VDKP). Lys-595 acts as the For Fru-6P isomerization activity in catalysis.

Homodimer.

It localises to the cytoplasm. It catalyses the reaction D-fructose 6-phosphate + L-glutamine = D-glucosamine 6-phosphate + L-glutamate. Functionally, catalyzes the first step in hexosamine metabolism, converting fructose-6P into glucosamine-6P using glutamine as a nitrogen source. The sequence is that of Glutamine--fructose-6-phosphate aminotransferase [isomerizing] from Bacillus cereus (strain ATCC 14579 / DSM 31 / CCUG 7414 / JCM 2152 / NBRC 15305 / NCIMB 9373 / NCTC 2599 / NRRL B-3711).